We begin with the raw amino-acid sequence, 469 residues long: Citrate synthase, mitochondrial (469 aa).

The N-terminal 30 residues, 1–30, are a transit peptide targeting the mitochondrion; the sequence is MSFLSVSRLAPKLLNSKNATYFLVAARNAS. Active-site residues include histidine 304 and histidine 350. Arginine 359 provides a ligand contact to oxaloacetate. Aspartate 405 is a catalytic residue. 2 residues coordinate oxaloacetate: arginine 431 and arginine 451.

The protein belongs to the citrate synthase family. As to quaternary structure, homodimer.

Its subcellular location is the mitochondrion matrix. It carries out the reaction oxaloacetate + acetyl-CoA + H2O = citrate + CoA + H(+). Its pathway is carbohydrate metabolism; tricarboxylic acid cycle; isocitrate from oxaloacetate: step 1/2. Functionally, key enzyme of the Krebs tricarboxylic acid cycle which catalyzes the synthesis of citrate from acetyl coenzyme A and oxaloacetate. The chain is Citrate synthase, mitochondrial (cs) from Katsuwonus pelamis (Skipjack tuna).